A 222-amino-acid polypeptide reads, in one-letter code: N-(5'-phosphoribosyl)anthranilate isomerase (222 aa).

The protein belongs to the TrpF family.

The enzyme catalyses N-(5-phospho-beta-D-ribosyl)anthranilate = 1-(2-carboxyphenylamino)-1-deoxy-D-ribulose 5-phosphate. It participates in amino-acid biosynthesis; L-tryptophan biosynthesis; L-tryptophan from chorismate: step 3/5. The polypeptide is N-(5'-phosphoribosyl)anthranilate isomerase (Xanthomonas campestris pv. campestris (strain 8004)).